We begin with the raw amino-acid sequence, 402 residues long: Tol-Pal system protein TolB (402 aa).

Residues 1–17 (MKKIVAIFLVFLGSLWA) form the signal peptide.

This sequence belongs to the TolB family. The Tol-Pal system is composed of five core proteins: the inner membrane proteins TolA, TolQ and TolR, the periplasmic protein TolB and the outer membrane protein Pal. They form a network linking the inner and outer membranes and the peptidoglycan layer.

The protein resides in the periplasm. Part of the Tol-Pal system, which plays a role in outer membrane invagination during cell division and is important for maintaining outer membrane integrity. In Campylobacter jejuni subsp. jejuni serotype O:2 (strain ATCC 700819 / NCTC 11168), this protein is Tol-Pal system protein TolB.